The primary structure comprises 495 residues: Protein nucleotidyltransferase YdiU (495 aa).

ATP-binding residues include Gly92, Gly94, Arg95, Lys114, Asp126, Gly127, Arg177, and Arg184. Asp261 acts as the Proton acceptor in catalysis. Residues Asn262 and Asp271 each contribute to the Mg(2+) site. Asp271 contacts ATP.

It belongs to the SELO family. Mg(2+) serves as cofactor. Mn(2+) is required as a cofactor.

It carries out the reaction L-seryl-[protein] + ATP = 3-O-(5'-adenylyl)-L-seryl-[protein] + diphosphate. The catalysed reaction is L-threonyl-[protein] + ATP = 3-O-(5'-adenylyl)-L-threonyl-[protein] + diphosphate. The enzyme catalyses L-tyrosyl-[protein] + ATP = O-(5'-adenylyl)-L-tyrosyl-[protein] + diphosphate. It catalyses the reaction L-histidyl-[protein] + UTP = N(tele)-(5'-uridylyl)-L-histidyl-[protein] + diphosphate. It carries out the reaction L-seryl-[protein] + UTP = O-(5'-uridylyl)-L-seryl-[protein] + diphosphate. The catalysed reaction is L-tyrosyl-[protein] + UTP = O-(5'-uridylyl)-L-tyrosyl-[protein] + diphosphate. In terms of biological role, nucleotidyltransferase involved in the post-translational modification of proteins. It can catalyze the addition of adenosine monophosphate (AMP) or uridine monophosphate (UMP) to a protein, resulting in modifications known as AMPylation and UMPylation. This chain is Protein nucleotidyltransferase YdiU, found in Bordetella bronchiseptica (strain ATCC BAA-588 / NCTC 13252 / RB50) (Alcaligenes bronchisepticus).